Reading from the N-terminus, the 335-residue chain is N-lysine methyltransferase KMT5A-A (335 aa).

2 disordered regions span residues 1–91 (MGRG…EVEK) and 133–183 (LPPE…EIES). Residues 67–91 (SVTHHESKCLGKPSTETRKKAEVEK) show a composition bias toward basic and acidic residues. Residues 145 to 161 (VKNKPLRKKTQRQKSPN) are compositionally biased toward basic residues. The 122-residue stretch at 199–320 (EGIKMHMITG…VGEELLYDYG (122 aa)) folds into the SET domain. S-adenosyl-L-methionine-binding positions include 209–211 (KGR), Y254, and 281–282 (NH).

The protein belongs to the class V-like SAM-binding methyltransferase superfamily. Histone-lysine methyltransferase family. PR/SET subfamily.

The protein localises to the nucleus. The protein resides in the chromosome. It catalyses the reaction L-lysyl(20)-[histone H4] + S-adenosyl-L-methionine = N(6)-methyl-L-lysyl(20)-[histone H4] + S-adenosyl-L-homocysteine + H(+). It carries out the reaction L-lysyl-[protein] + S-adenosyl-L-methionine = N(6)-methyl-L-lysyl-[protein] + S-adenosyl-L-homocysteine + H(+). Its function is as follows. Protein-lysine N-methyltransferase that monomethylates both histones and non-histone proteins. Specifically monomethylates 'Lys-20' of histone H4 (H4K20me1). H4K20me1 is enriched during mitosis and represents a specific tag for epigenetic transcriptional repression. Mainly functions in euchromatin regions, thereby playing a central role in the silencing of euchromatic genes. Required for cell proliferation, probably by contributing to the maintenance of proper higher-order structure of DNA during mitosis. Involved in chromosome condensation and proper cytokinesis. This chain is N-lysine methyltransferase KMT5A-A, found in Xenopus laevis (African clawed frog).